A 205-amino-acid polypeptide reads, in one-letter code: Thiamine-phosphate synthase (205 aa).

4-amino-2-methyl-5-(diphosphooxymethyl)pyrimidine-binding positions include Q37 to K41 and N69. Mg(2+) contacts are provided by D70 and D89. S108 provides a ligand contact to 4-amino-2-methyl-5-(diphosphooxymethyl)pyrimidine. T134 to S136 contacts 2-[(2R,5Z)-2-carboxy-4-methylthiazol-5(2H)-ylidene]ethyl phosphate. K137 lines the 4-amino-2-methyl-5-(diphosphooxymethyl)pyrimidine pocket. 2-[(2R,5Z)-2-carboxy-4-methylthiazol-5(2H)-ylidene]ethyl phosphate contacts are provided by residues G165 and I185–S186.

It belongs to the thiamine-phosphate synthase family. Requires Mg(2+) as cofactor.

It carries out the reaction 2-[(2R,5Z)-2-carboxy-4-methylthiazol-5(2H)-ylidene]ethyl phosphate + 4-amino-2-methyl-5-(diphosphooxymethyl)pyrimidine + 2 H(+) = thiamine phosphate + CO2 + diphosphate. The enzyme catalyses 2-(2-carboxy-4-methylthiazol-5-yl)ethyl phosphate + 4-amino-2-methyl-5-(diphosphooxymethyl)pyrimidine + 2 H(+) = thiamine phosphate + CO2 + diphosphate. The catalysed reaction is 4-methyl-5-(2-phosphooxyethyl)-thiazole + 4-amino-2-methyl-5-(diphosphooxymethyl)pyrimidine + H(+) = thiamine phosphate + diphosphate. The protein operates within cofactor biosynthesis; thiamine diphosphate biosynthesis; thiamine phosphate from 4-amino-2-methyl-5-diphosphomethylpyrimidine and 4-methyl-5-(2-phosphoethyl)-thiazole: step 1/1. Its function is as follows. Condenses 4-methyl-5-(beta-hydroxyethyl)thiazole monophosphate (THZ-P) and 2-methyl-4-amino-5-hydroxymethyl pyrimidine pyrophosphate (HMP-PP) to form thiamine monophosphate (TMP). The protein is Thiamine-phosphate synthase of Clostridium botulinum (strain Kyoto / Type A2).